Consider the following 209-residue polypeptide: Dual specificity phosphatase 29 (209 aa).

Positions 45-193 (HVNEVWPNLY…LRELDIKLAL (149 aa)) constitute a Tyrosine-protein phosphatase domain. Residue 137-144 (NCAMGRSR) participates in substrate binding. The active-site Phosphocysteine intermediate is cysteine 138.

The protein belongs to the protein-tyrosine phosphatase family. Non-receptor class dual specificity subfamily.

The protein localises to the cytoplasm. The protein resides in the nucleus. The catalysed reaction is O-phospho-L-tyrosyl-[protein] + H2O = L-tyrosyl-[protein] + phosphate. The enzyme catalyses O-phospho-L-seryl-[protein] + H2O = L-seryl-[protein] + phosphate. It catalyses the reaction O-phospho-L-threonyl-[protein] + H2O = L-threonyl-[protein] + phosphate. Dual specificity phosphatase able to dephosphorylate phosphotyrosine, phosphoserine and phosphothreonine residues, with a preference for phosphotyrosine as a substrate. In terms of biological role, dual specificity phosphatase able to dephosphorylate phosphotyrosine, phosphoserine and phosphothreonine residues within the same substrate, with a preference for phosphotyrosine as a substrate. Involved in the modulation of AMPK and MAPK1/2 signaling pathway. This Xenopus laevis (African clawed frog) protein is Dual specificity phosphatase 29 (dusp29).